The sequence spans 72 residues: Large ribosomal subunit protein bL28 (72 aa).

It belongs to the bacterial ribosomal protein bL28 family.

In Chlorobium limicola (strain DSM 245 / NBRC 103803 / 6330), this protein is Large ribosomal subunit protein bL28.